We begin with the raw amino-acid sequence, 245 residues long: Probable phosphatase YpAngola_A2446 (245 aa).

Residues histidine 7, histidine 9, histidine 15, histidine 40, glutamate 73, histidine 101, histidine 131, aspartate 192, and histidine 194 each coordinate Zn(2+).

This sequence belongs to the PHP family. In terms of assembly, homotrimer. Zn(2+) is required as a cofactor.

This chain is Probable phosphatase YpAngola_A2446, found in Yersinia pestis bv. Antiqua (strain Angola).